Reading from the N-terminus, the 92-residue chain is Small ribosomal subunit protein bS20 (92 aa).

Residues 1–21 are compositionally biased toward basic and acidic residues; sequence MPLHKSAEKRLRQAARRNERN. Disordered stretches follow at residues 1 to 26 and 73 to 92; these read MPLH…ARKK and ASRK…PTAS. Over residues 82 to 92 the composition is skewed to polar residues; it reads KALNNYTPTAS.

It belongs to the bacterial ribosomal protein bS20 family.

Functionally, binds directly to 16S ribosomal RNA. The chain is Small ribosomal subunit protein bS20 from Chlorobaculum tepidum (strain ATCC 49652 / DSM 12025 / NBRC 103806 / TLS) (Chlorobium tepidum).